The chain runs to 457 residues: Siroheme synthase (457 aa).

The precorrin-2 dehydrogenase /sirohydrochlorin ferrochelatase stretch occupies residues 1 to 204 (MDHLPIFCQL…ADEKAVNATT (204 aa)). Residues 22-23 (DV) and 43-44 (LT) each bind NAD(+). Ser-128 is modified (phosphoserine). A uroporphyrinogen-III C-methyltransferase region spans residues 216 to 457 (GEVVLVGAGP…RDKLNWFSNH (242 aa)). Pro-225 contributes to the S-adenosyl-L-methionine binding site. Residue Asp-248 is the Proton acceptor of the active site. The active-site Proton donor is Lys-270. Residues 301-303 (GGD), Ile-306, 331-332 (TA), Met-382, and Gly-411 contribute to the S-adenosyl-L-methionine site.

This sequence in the N-terminal section; belongs to the precorrin-2 dehydrogenase / sirohydrochlorin ferrochelatase family. It in the C-terminal section; belongs to the precorrin methyltransferase family.

It catalyses the reaction uroporphyrinogen III + 2 S-adenosyl-L-methionine = precorrin-2 + 2 S-adenosyl-L-homocysteine + H(+). The enzyme catalyses precorrin-2 + NAD(+) = sirohydrochlorin + NADH + 2 H(+). The catalysed reaction is siroheme + 2 H(+) = sirohydrochlorin + Fe(2+). The protein operates within cofactor biosynthesis; adenosylcobalamin biosynthesis; precorrin-2 from uroporphyrinogen III: step 1/1. It functions in the pathway cofactor biosynthesis; adenosylcobalamin biosynthesis; sirohydrochlorin from precorrin-2: step 1/1. Its pathway is porphyrin-containing compound metabolism; siroheme biosynthesis; precorrin-2 from uroporphyrinogen III: step 1/1. It participates in porphyrin-containing compound metabolism; siroheme biosynthesis; siroheme from sirohydrochlorin: step 1/1. The protein operates within porphyrin-containing compound metabolism; siroheme biosynthesis; sirohydrochlorin from precorrin-2: step 1/1. In terms of biological role, multifunctional enzyme that catalyzes the SAM-dependent methylations of uroporphyrinogen III at position C-2 and C-7 to form precorrin-2 via precorrin-1. Then it catalyzes the NAD-dependent ring dehydrogenation of precorrin-2 to yield sirohydrochlorin. Finally, it catalyzes the ferrochelation of sirohydrochlorin to yield siroheme. This is Siroheme synthase from Salmonella typhi.